Consider the following 282-residue polypeptide: Large ribosomal subunit protein uL2 (282 aa).

Disordered regions lie at residues 31 to 56 (EKSLLDSQSHSAGRNNAGKMTVRHRG) and 226 to 282 (SVMN…GSKM). Over residues 35–44 (LDSQSHSAGR) the composition is skewed to polar residues. Over residues 257–266 (TVGKKTRSKK) the composition is skewed to basic residues.

The protein belongs to the universal ribosomal protein uL2 family. In terms of assembly, part of the 50S ribosomal subunit. Forms a bridge to the 30S subunit in the 70S ribosome.

In terms of biological role, one of the primary rRNA binding proteins. Required for association of the 30S and 50S subunits to form the 70S ribosome, for tRNA binding and peptide bond formation. It has been suggested to have peptidyltransferase activity; this is somewhat controversial. Makes several contacts with the 16S rRNA in the 70S ribosome. This is Large ribosomal subunit protein uL2 from Levilactobacillus brevis (strain ATCC 367 / BCRC 12310 / CIP 105137 / JCM 1170 / LMG 11437 / NCIMB 947 / NCTC 947) (Lactobacillus brevis).